Here is a 739-residue protein sequence, read N- to C-terminus: Phosphoribosylformylglycinamidine synthase subunit PurL (739 aa).

H53 is an active-site residue. Y56 and K95 together coordinate ATP. E97 lines the Mg(2+) pocket. Residues 98-101 and R120 contribute to the substrate site; that span reads SHNH. Catalysis depends on H99, which acts as the Proton acceptor. A Mg(2+)-binding site is contributed by D121. Q244 provides a ligand contact to substrate. Residue D274 participates in Mg(2+) binding. 318-320 is a binding site for substrate; sequence ESQ. The ATP site is built by D501 and G538. Residue N539 participates in Mg(2+) binding. A substrate-binding site is contributed by S541.

It belongs to the FGAMS family. Monomer. Part of the FGAM synthase complex composed of 1 PurL, 1 PurQ and 2 PurS subunits.

The protein localises to the cytoplasm. It catalyses the reaction N(2)-formyl-N(1)-(5-phospho-beta-D-ribosyl)glycinamide + L-glutamine + ATP + H2O = 2-formamido-N(1)-(5-O-phospho-beta-D-ribosyl)acetamidine + L-glutamate + ADP + phosphate + H(+). It participates in purine metabolism; IMP biosynthesis via de novo pathway; 5-amino-1-(5-phospho-D-ribosyl)imidazole from N(2)-formyl-N(1)-(5-phospho-D-ribosyl)glycinamide: step 1/2. Part of the phosphoribosylformylglycinamidine synthase complex involved in the purines biosynthetic pathway. Catalyzes the ATP-dependent conversion of formylglycinamide ribonucleotide (FGAR) and glutamine to yield formylglycinamidine ribonucleotide (FGAM) and glutamate. The FGAM synthase complex is composed of three subunits. PurQ produces an ammonia molecule by converting glutamine to glutamate. PurL transfers the ammonia molecule to FGAR to form FGAM in an ATP-dependent manner. PurS interacts with PurQ and PurL and is thought to assist in the transfer of the ammonia molecule from PurQ to PurL. The chain is Phosphoribosylformylglycinamidine synthase subunit PurL from Listeria monocytogenes serovar 1/2a (strain ATCC BAA-679 / EGD-e).